The chain runs to 317 residues: Ribosomal protein L11 methyltransferase (317 aa).

4 residues coordinate S-adenosyl-L-methionine: Thr158, Gly179, Asp201, and Asn244.

The protein belongs to the methyltransferase superfamily. PrmA family.

The protein resides in the cytoplasm. The catalysed reaction is L-lysyl-[protein] + 3 S-adenosyl-L-methionine = N(6),N(6),N(6)-trimethyl-L-lysyl-[protein] + 3 S-adenosyl-L-homocysteine + 3 H(+). In terms of biological role, methylates ribosomal protein L11. The polypeptide is Ribosomal protein L11 methyltransferase (Streptococcus pyogenes serotype M12 (strain MGAS2096)).